Consider the following 456-residue polypeptide: L-seryl-tRNA(Sec) selenium transferase (456 aa).

At K288 the chain carries N6-(pyridoxal phosphate)lysine.

Belongs to the SelA family. Requires pyridoxal 5'-phosphate as cofactor.

It localises to the cytoplasm. The catalysed reaction is L-seryl-tRNA(Sec) + selenophosphate + H(+) = L-selenocysteinyl-tRNA(Sec) + phosphate. It functions in the pathway aminoacyl-tRNA biosynthesis; selenocysteinyl-tRNA(Sec) biosynthesis; selenocysteinyl-tRNA(Sec) from L-seryl-tRNA(Sec) (bacterial route): step 1/1. Functionally, converts seryl-tRNA(Sec) to selenocysteinyl-tRNA(Sec) required for selenoprotein biosynthesis. This Helicobacter hepaticus (strain ATCC 51449 / 3B1) protein is L-seryl-tRNA(Sec) selenium transferase.